A 444-amino-acid chain; its full sequence is Xaa-Pro dipeptidase (444 aa).

Asp247, Asp258, His340, Glu385, and Glu424 together coordinate Mn(2+).

This sequence belongs to the peptidase M24B family. Bacterial-type prolidase subfamily. Requires Mn(2+) as cofactor.

It catalyses the reaction Xaa-L-Pro dipeptide + H2O = an L-alpha-amino acid + L-proline. Functionally, splits dipeptides with a prolyl residue in the C-terminal position. This chain is Xaa-Pro dipeptidase, found in Photorhabdus laumondii subsp. laumondii (strain DSM 15139 / CIP 105565 / TT01) (Photorhabdus luminescens subsp. laumondii).